The chain runs to 303 residues: NmrA-like family domain-containing oxidoreductase FVEG_08287 (303 aa).

Residues 8-13, 8-14, 36-39, Arg-37, 56-57, 77-79, and 159-162 each bind NADP(+); these read LGAGEL, LGAGELG, LRPS, QG, IFR, and FMSF.

This sequence belongs to the NmrA-type oxidoreductase family.

Its function is as follows. NmrA-like family domain-containing oxidoreductase; part of the Fusarium detoxification of benzoxazolinone cluster 1 (FDB1) involved in the degradation of benzoxazolinones produced by the host plant. Maize, wheat, and rye produce the 2 benzoxazinone phytoanticipins 2,4-dihy-droxy-7-methoxy-1,4-benzoxazin-3-one (DIMBOA) and 2,4-dihydroxy-1,4-benzoxazin-3-one (DIBOA) that, due to their inherent instability once released, spontaneously degrade to the more stable corresponding benzoxazolinones, 6-methoxy-2-benzoxazolinone (MBOA) and 2-benzoxazolinone (BOA), respectively. The first step in the detoxification of benzoxazolinones involves the hydrolysis of the cyclic ester bond of benzoxazolinones by the FDB1 cluster gamma-lactamase MBL1 to aminophenols. MBL1 is able to convert BOA into 2-aminophenol (2-AP), as well as MBOA into 5-methoxy-2-aminophenol (2-AMP). The FDB2 cluster N-malonyltransferase FDB2/NAT1 then metabolizes aminophenols via N-malonylation to non-toxic malonamic acids. FDB2/NAT1 converts 2-AP into N-(2-hydroxyphenyl) malonamic acid (HPMA) and 2-AMP into N-(2-hydroxy-4-methoxyphenyl) malonamic acid (HMPMA). The duplicated dienlactone hydrolases DLH1 and DLH2 may provide redundant function for hydrolyzing the lactone moiety in the BOA molecule. The roles of the amidases an other enzymes encoded by the 2 FDB clusters have not been identified so far. The sequence is that of NmrA-like family domain-containing oxidoreductase FVEG_08287 from Gibberella moniliformis (strain M3125 / FGSC 7600) (Maize ear and stalk rot fungus).